The primary structure comprises 345 residues: MSTEIQKIEDNNLKESQMWNSKELKEAIKEIEKMFGKGSIMVLGQSDNLNVETFSSGSLLLDNALGIGGYPKGRIIEIYGPESSGKTTLSLHAICEIQKLGGIAAFIDAEHSLDPKYCHNLGIDTNKLLVSQPDNGEQALDILEMLINSNSIDLIIVDSVAALVPKTELEGEMSDQSIGLQARMMSKALRKLNGLIAKSNTTVIFINQLREKIGVIFGNPETTTGGKALKFFSSIRLEVRKSENILSNSEIIGNKIKIKIVKNKTAIPFKTATISLLYNKGIDKIGELVDLLVSYEIVEKSGVWYSYQNEKIGQGKTSVIQWLNADEKRTNELIQQVKKIIEQKE.

80–87 contributes to the ATP binding site; sequence GPESSGKT.

This sequence belongs to the RecA family.

The protein resides in the cytoplasm. Functionally, can catalyze the hydrolysis of ATP in the presence of single-stranded DNA, the ATP-dependent uptake of single-stranded DNA by duplex DNA, and the ATP-dependent hybridization of homologous single-stranded DNAs. It interacts with LexA causing its activation and leading to its autocatalytic cleavage. This Mycoplasma mycoides subsp. mycoides SC (strain CCUG 32753 / NCTC 10114 / PG1) protein is Protein RecA.